A 463-amino-acid polypeptide reads, in one-letter code: ATP sulfurylase 1, chloroplastic (463 aa).

Residues Met-1–Ala-48 constitute a chloroplast transit peptide.

It belongs to the sulfate adenylyltransferase family. In terms of assembly, homotetramer.

The protein resides in the plastid. It localises to the chloroplast stroma. It catalyses the reaction sulfate + ATP + H(+) = adenosine 5'-phosphosulfate + diphosphate. The protein operates within sulfur metabolism; hydrogen sulfide biosynthesis; sulfite from sulfate: step 1/3. In terms of biological role, mediates selenate (Se) reduction, and promotes Se and sulfur (S) uptake and assimilation. This Arabidopsis thaliana (Mouse-ear cress) protein is ATP sulfurylase 1, chloroplastic (APS1).